Reading from the N-terminus, the 312-residue chain is Ankyrin repeat family A protein 2 (312 aa).

5 ANK repeats span residues 147–179 (ANSL…HTDE), 180–212 (EGFT…LLGK), 213–245 (GRES…EYDW), 246–278 (NGGT…IETD), and 279–312 (SGYN…NIRE).

As to quaternary structure, interacts (via ANK repeats) with CCDC8 (via PxLPxI/L motif); mediates the interaction with the 3M complex which is composed of CCDC8, CUL7 and OBSL1. Interacts (via ANK repeats) with HDAC4 (via PxLPxI/L motif). Interacts (via ANK repeats) with HDAC5 (via PxLPxI/L motif). Interacts (via ANK repeats) with LRP2/megalin (via PxLPxI/L motif). Interacts (via ANK repeats) with RFX7 (via PxLPxI/L motif). Interacts with AHRR. Interacts with NEK6.

The protein resides in the cytoplasm. It is found in the cytoskeleton. It localises to the membrane. May regulate the interaction between the 3M complex and the histone deacetylases HDAC4 and HDAC5. May also regulate LRP2/megalin. The sequence is that of Ankyrin repeat family A protein 2 (Ankra2) from Mus musculus (Mouse).